We begin with the raw amino-acid sequence, 254 residues long: Triosephosphate isomerase (254 aa).

Substrate is bound at residue Asn-9 to Lys-11. His-96 serves as the catalytic Electrophile. Catalysis depends on Glu-169, which acts as the Proton acceptor. Substrate-binding positions include Gly-175, Ser-215, and Gly-236–Gly-237.

It belongs to the triosephosphate isomerase family. In terms of assembly, homodimer.

The protein localises to the cytoplasm. The catalysed reaction is D-glyceraldehyde 3-phosphate = dihydroxyacetone phosphate. It functions in the pathway carbohydrate biosynthesis; gluconeogenesis. Its pathway is carbohydrate degradation; glycolysis; D-glyceraldehyde 3-phosphate from glycerone phosphate: step 1/1. Functionally, involved in the gluconeogenesis. Catalyzes stereospecifically the conversion of dihydroxyacetone phosphate (DHAP) to D-glyceraldehyde-3-phosphate (G3P). This is Triosephosphate isomerase from Borrelia hermsii (strain HS1 / DAH).